Consider the following 150-residue polypeptide: D-aminoacyl-tRNA deacylase (150 aa).

The Gly-cisPro motif, important for rejection of L-amino acids motif lies at 138–139 (GP).

Belongs to the DTD family. In terms of assembly, homodimer.

It is found in the cytoplasm. The enzyme catalyses glycyl-tRNA(Ala) + H2O = tRNA(Ala) + glycine + H(+). It catalyses the reaction a D-aminoacyl-tRNA + H2O = a tRNA + a D-alpha-amino acid + H(+). In terms of biological role, an aminoacyl-tRNA editing enzyme that deacylates mischarged D-aminoacyl-tRNAs. Also deacylates mischarged glycyl-tRNA(Ala), protecting cells against glycine mischarging by AlaRS. Acts via tRNA-based rather than protein-based catalysis; rejects L-amino acids rather than detecting D-amino acids in the active site. By recycling D-aminoacyl-tRNA to D-amino acids and free tRNA molecules, this enzyme counteracts the toxicity associated with the formation of D-aminoacyl-tRNA entities in vivo and helps enforce protein L-homochirality. This is D-aminoacyl-tRNA deacylase from Chlorobaculum tepidum (strain ATCC 49652 / DSM 12025 / NBRC 103806 / TLS) (Chlorobium tepidum).